We begin with the raw amino-acid sequence, 1043 residues long: MELQKGKGAAAAAAAASGAAGGGGGGAGAGAPGGGRLLLSTSLDAKDELEERLERCMSIVTSMTAGVSEREANDALNAYVCKGLPQHEEICLGLFTLILTEPAQAQKCYRDLALVSRDGMNIVLNKINQILMEKYLKLQDTCRTQLVWLVRELVKSGVLGADGVCMTFMKQIAGGDVTAKNIWLAESVLDILTEQREWVLKSSILIAMAVYTYLRLIVDHHGTAQLQALRQKEVDFCISLLRERFMECLMIGRDLVRLLQNVARIPEFELLWKDIIHNPQALSPQFTGILQLLQSRTSRKFLACRLTPDMETKLLFMTSRVRFGQQKRYQDWFQRQYLSTPDSQSLRCDLIRYICGVVHPSNEVLSSDILPRWAIIGWLLTACTSNVAASNAKLALFYDWLFFSPDKDSIMNIEPAILVMHHSMKPHPAITATLLDFMCRIIPNFYPPLEGHVRQGVFSSLNHIVEKRVLAHLAPLFDNPKLDKELRAMLREKFPEFCSSPSPPVEVKIEEPVSMEMDNHMSDKDESCYDNAEAAFSDDEEDLNSKGKKREFRFHPIKETVVEEPVDITPYLDQLDESLRDKVLQLQKGSDTEAQCEVMQEIVDQVLEEDFDSEQLSVLASCLQELFKAHFRGEVLPEEITEESLEESVGKPLYLIFRNLCQMQEDNSSFSLLLDLLSELYQKQPKIGYHLLYYLRASKAAAGKMNLYESFAQATQLGDLHTCLMMDMKACQEDDVRLLCHLTPSIYTEFPDETLRSGELLNMIVAVIDSAQLQELVCHVMMGNLVMFRKDSVLNILIQSLDWETFEQYCAWQLFLAHNIPLETIIPILQHLKYKEHPEALSCLLLQLRREKPSEEMVKMVLSRPCHPDDQFTTSILRHWCMKHDELLAERIKSLLIKNNSLPRKRQSLRSSSSKLAQLTLEQILEHLDNLRLNLTNTKQNFFSQTPILQALQHVQASCDEAHKMKFSDLFSLAEEYEDSSTKPPKSRRKAALSSPRSRKNATQPPNAEEESGSSSASEEEDTKPKPTKRKRRGSSAVGSDSD.

Position 1 is an N-acetylmethionine (methionine 1). A phosphoserine mark is found at serine 502, serine 537, and serine 995. The disordered stretch occupies residues 977-1043 (YEDSSTKPPK…GSSAVGSDSD (67 aa)). Over residues 1008–1022 (AEEESGSSSASEEED) the composition is skewed to acidic residues.

It belongs to the Integrator subunit 3 family. In terms of assembly, component of the Integrator complex, composed of core subunits INTS1, INTS2, INTS3, INTS4, INTS5, INTS6, INTS7, INTS8, INTS9/RC74, INTS10, INTS11/CPSF3L, INTS12, INTS13, INTS14 and INTS15. The core complex associates with protein phosphatase 2A subunits PPP2CA and PPP2R1A, to form the Integrator-PP2A (INTAC) complex. Component of the SOSS complex, composed of SOSS-B (SOSS-B1/NABP2 or SOSS-B2/NABP1), SOSS-A/INTS3 and SOSS-C/INIP. SOSS complexes containing SOSS-B1/NABP2 are more abundant than complexes containing SOSS-B2/NABP1. Interacts with SOSS-B1/NABP2, SOSS-B2/NABP1 and SOSS-C/INIP; the interaction is direct. Interacts with NBN/NBS1.

Its subcellular location is the nucleus. It localises to the cytoplasm. Functionally, component of the integrator complex, a multiprotein complex that terminates RNA polymerase II (Pol II) transcription in the promoter-proximal region of genes. The integrator complex provides a quality checkpoint during transcription elongation by driving premature transcription termination of transcripts that are unfavorably configured for transcriptional elongation: the complex terminates transcription by (1) catalyzing dephosphorylation of the C-terminal domain (CTD) of Pol II subunit POLR2A/RPB1 and SUPT5H/SPT5, (2) degrading the exiting nascent RNA transcript via endonuclease activity and (3) promoting the release of Pol II from bound DNA. The integrator complex is also involved in terminating the synthesis of non-coding Pol II transcripts, such as enhancer RNAs (eRNAs), small nuclear RNAs (snRNAs), telomerase RNAs and long non-coding RNAs (lncRNAs). Within the integrator complex, INTS3 is involved in the post-termination step: INTS3 binds INTS7 in the open conformation of integrator complex and prevents the rebinding of Pol II to the integrator after termination cycle. Mediates recruitment of cytoplasmic dynein to the nuclear envelope, probably as component of the integrator complex. Component of the SOSS complex, a multiprotein complex that functions downstream of the MRN complex to promote DNA repair and G2/M checkpoint. The SOSS complex associates with single-stranded DNA at DNA lesions and influences diverse endpoints in the cellular DNA damage response including cell-cycle checkpoint activation, recombinational repair and maintenance of genomic stability. The SOSS complex is required for efficient homologous recombination-dependent repair of double-strand breaks (DSBs) and ATM-dependent signaling pathways. In the SOSS complex, it is required for the assembly of the complex and for stabilization of the complex at DNA damage sites. The protein is Integrator complex subunit 3 (INTS3) of Pongo abelii (Sumatran orangutan).